A 356-amino-acid polypeptide reads, in one-letter code: Histidinol-phosphate aminotransferase 2 (356 aa).

At K213 the chain carries N6-(pyridoxal phosphate)lysine.

This sequence belongs to the class-II pyridoxal-phosphate-dependent aminotransferase family. Histidinol-phosphate aminotransferase subfamily. Homodimer. It depends on pyridoxal 5'-phosphate as a cofactor.

The catalysed reaction is L-histidinol phosphate + 2-oxoglutarate = 3-(imidazol-4-yl)-2-oxopropyl phosphate + L-glutamate. Its pathway is amino-acid biosynthesis; L-histidine biosynthesis; L-histidine from 5-phospho-alpha-D-ribose 1-diphosphate: step 7/9. This is Histidinol-phosphate aminotransferase 2 from Burkholderia mallei (strain ATCC 23344).